We begin with the raw amino-acid sequence, 322 residues long: N-acetyl-gamma-glutamyl-phosphate reductase (322 aa).

Cys132 is an active-site residue.

Belongs to the NAGSA dehydrogenase family. Type 1 subfamily.

Its subcellular location is the cytoplasm. It catalyses the reaction N-acetyl-L-glutamate 5-semialdehyde + phosphate + NADP(+) = N-acetyl-L-glutamyl 5-phosphate + NADPH + H(+). It participates in amino-acid biosynthesis; L-arginine biosynthesis; N(2)-acetyl-L-ornithine from L-glutamate: step 3/4. In terms of biological role, catalyzes the NADPH-dependent reduction of N-acetyl-5-glutamyl phosphate to yield N-acetyl-L-glutamate 5-semialdehyde. This is N-acetyl-gamma-glutamyl-phosphate reductase from Phocaeicola vulgatus (strain ATCC 8482 / DSM 1447 / JCM 5826 / CCUG 4940 / NBRC 14291 / NCTC 11154) (Bacteroides vulgatus).